Reading from the N-terminus, the 586-residue chain is Asparagine synthetase, nodule [glutamine-hydrolyzing] (586 aa).

Cys2 acts as the For GATase activity in catalysis. Residues Cys2 to Arg185 enclose the Glutamine amidotransferase type-2 domain. L-glutamine is bound by residues Arg50 to Val54, Asn75 to Glu77, and Asp98. One can recognise an Asparagine synthetase domain in the interval Pro193 to Pro517. ATP contacts are provided by residues Leu232, Val268, and Ser342–Gly343.

In terms of tissue distribution, root nodules.

The enzyme catalyses L-aspartate + L-glutamine + ATP + H2O = L-asparagine + L-glutamate + AMP + diphosphate + H(+). The protein operates within amino-acid biosynthesis; L-asparagine biosynthesis; L-asparagine from L-aspartate (L-Gln route): step 1/1. This Pisum sativum (Garden pea) protein is Asparagine synthetase, nodule [glutamine-hydrolyzing] (AS1).